Here is a 412-residue protein sequence, read N- to C-terminus: Putative competence-damage inducible protein (412 aa).

It belongs to the CinA family.

This is Putative competence-damage inducible protein from Caldanaerobacter subterraneus subsp. tengcongensis (strain DSM 15242 / JCM 11007 / NBRC 100824 / MB4) (Thermoanaerobacter tengcongensis).